A 386-amino-acid polypeptide reads, in one-letter code: Methionyl-tRNA formyltransferase, mitochondrial (386 aa).

Belongs to the Fmt family.

It localises to the mitochondrion. It catalyses the reaction L-methionyl-tRNA(fMet) + (6R)-10-formyltetrahydrofolate = N-formyl-L-methionyl-tRNA(fMet) + (6S)-5,6,7,8-tetrahydrofolate + H(+). Its function is as follows. Methionyl-tRNA formyltransferase that formylates methionyl-tRNA in mitochondria and is crucial for translation initiation. The polypeptide is Methionyl-tRNA formyltransferase, mitochondrial (Mtfmt) (Mus musculus (Mouse)).